A 274-amino-acid polypeptide reads, in one-letter code: Undecaprenyl-diphosphatase (274 aa).

Transmembrane regions (helical) follow at residues 9–29, 47–67, 95–115, 120–140, 161–181, 197–217, 224–244, and 254–274; these read LEYL…FIPV, PGAS…AWYF, ILIG…FVPY, VLRS…FMYL, LIGF…GITI, FSFL…FISS, LGFF…LLAI, and NGLK…LLNL.

It belongs to the UppP family.

It is found in the cell inner membrane. The catalysed reaction is di-trans,octa-cis-undecaprenyl diphosphate + H2O = di-trans,octa-cis-undecaprenyl phosphate + phosphate + H(+). Its function is as follows. Catalyzes the dephosphorylation of undecaprenyl diphosphate (UPP). Confers resistance to bacitracin. This is Undecaprenyl-diphosphatase from Prochlorococcus marinus (strain AS9601).